The chain runs to 158 residues: Dysbindin domain-containing protein 2 (158 aa).

The disordered stretch occupies residues 79–158; that stretch reads FLPCEESSPA…DGGAEPGPCS (80 aa). A compositionally biased stretch (low complexity) spans 106–131; sequence PTSDRTTSRTSSLSSDSSNLRSPNPS. Serine 119 and serine 120 each carry phosphoserine. The residue at position 137 (threonine 137) is a Phosphothreonine. Serine 142 carries the phosphoserine modification. Positions 142-151 are enriched in acidic residues; the sequence is SDEEDGDDGG.

Belongs to the dysbindin family. In terms of assembly, monomer. Interacts with CSNK1D and CSNK1E.

Functionally, may modulate the activity of casein kinase-1. Inhibits CSNK1D autophosphorylation (in vitro). This chain is Dysbindin domain-containing protein 2 (Dbndd2), found in Mus musculus (Mouse).